We begin with the raw amino-acid sequence, 104 residues long: Phosphate metabolism protein 6 (104 aa).

The chain crosses the membrane as a helical span at residues 76–96; it reads IIVIIIVLLLYSLTMVGLFYV.

The protein localises to the vacuole membrane. The polypeptide is Phosphate metabolism protein 6 (PHM6) (Saccharomyces cerevisiae (strain ATCC 204508 / S288c) (Baker's yeast)).